A 1305-amino-acid polypeptide reads, in one-letter code: MTVPATTKDPRDSLLDSPLVHFPSLPRDSYLPHPTEHTVVSIDDEEILPSTRSSLHDVLQVAWSLVLADQTSSPEVVFGMAYDGRTTDDGEQAIMPFRLRLRAEDSVQEALAAAAAVTLQMRQWEHMGLRRFSTMSPQNVVLCQFRNLFVIDHKDPTEDCVERSCTSYSKGYALTVLCEIVDQVIHVHAMFDPLVLPPGQLRLILHQFGDILKTCLRGPPGRVKDLQQIGPDGLNYIYEWNRGGERDEGIVCVHQLIEDRFKQAPFAAAVCAWDGALTYGELDRWAKRIAAQLVEAGVKPGSFVGIYMQKSVLAVVAMVAIVKAGAAFIFLPPFLPTVRLQLMCQRTPVELVLSVATLLRSASDLSVPVQVLDYRAKDEEETAATSGGSEIAQPNHPLYAIFTSGSTGEPKGVVVDRASFGPGVREYCRRAQLGPNSRLFQSVSYAFIVSIFEQLISLALGACICVPSEEQLQNDMEGAMCRYQATWGCMTPSVARTLKPERLSCLKTLALTGEPVNQSDMEQWKDHVNLYTLYGQSETGSTLLINSITGSLADSRGLGRPSTGACWIVDPEDPTTLRPLGAEGELLIETTALARGYMNNLEESARTFIEMPKWLKQLRPQGHRSRCLLTGDIVRYYDTDGTIRLLSRKGTGAKIRGQRVELGEIEHHLRPKFPDARHILVDVVCPAKAGTGHSILVAFVHGPWKDTEKTGELATATSEFRQQARRVIAELRQVLPSFMVPSAIVPLADVPTTATGKVHRKSLRERMSALTVAEILAYNQEDRSAYRAPTTEQEALLLSICAELLYLPASSISLDNSFFQVGGDSLNARQLAAKVRSHGFSLLATDIFEASTLASLASRMRQYNQTDSEVSTAPEGDPFEGLKQELLGELPSSLVKENVEDVYPASDMQARAIRTHMLDYFPFEIKGQLDRHQLQHACETLIRRTPVMRSVFINFRGKMLQVTLRSVAIPYKELTIPTGEDPLSWARLHIAEDKKKTAAFDRPTIRFTLCRQSLQHHIFIVRLPHAIYDGSCLEQVAKQISAAYNAQTLPEAPDFAAYARRCARLRTPSAMDFWRNFLAESEVTRLPHASKGDEVAVIYPGECSPRSPPPGITMATAIKAAWAWVLHKRTGKLDVLFGQVGSTRGIDIPGATDIIGLCLNITAVRVQFAGLQTVEDLLRMLQQQHMRALMYETADWTDIVANASSWPEGTELDSVVLHENFGGLPALDLGDAIGEMADPIFSLSTSNPLTLVTWPSTQTLTSFLLTRENVFQKEYAEGLVTEFNQTLVQFLDFPESSLCSISTCG.

The tract at residues threonine 278–lysine 672 is adenylation. A Carrier domain is found at alanine 788–asparagine 864. The residue at position 825 (serine 825) is an O-(pantetheine 4'-phosphoryl)serine. Positions lysine 926–valine 1166 are condensation.

It belongs to the NRP synthetase family.

It catalyses the reaction hancockiamide D + (E)-cinnamate + ATP = hancockiamide A + AMP + diphosphate. It carries out the reaction hancockiamide H + (E)-cinnamate + ATP = hancockiamide G + AMP + diphosphate. The protein operates within secondary metabolite biosynthesis. Its function is as follows. Nonribosomal peptide synthetase; part of the gene cluster that mediates the biosynthesis of hancockiamides, an unusual new family of N-cinnamoylated piperazines. The NRPS hkm10 and the NmrA-like reductase hkm9 are proposed to convert two molecules of L-Phe to the intermediary piperazine called xenocockiamide A. Xenocockiamide A is then converted to hancockiamide D via a series of hydroxylations and O-methylations. The tyrosinase hkm6 may catalyze an aromatic hydroxylation, then the 2-oxoglutarate-dependent Fe(II) dioxygenase hkm4 and the FAD-dependent phenol hydroxylase hkm7 may catalyze consecutive hydroxylations to install 2 more hydroxy groups, and the methyltransferase hkm8 probably catalyzes two methylations using 2 molecules of S-adenosyl-L-methionine (SAM). The NRPS hkm11 activates and transfers trans-cinnamate supplied by the PAL hkm12 to hancockiamide D and produces hancockiamide A. NRPS Hkm11 has the flexibility to tolerate the bulky hancockiamide G as a substrate and the absence of the acetyl-transferase hkm3 opens up the opportunity for hkm11 to introduce a second N-cinnamoyl moiety. The cytochrome P450 monooxygenase hkm5 catalyzes the methylenedioxy bridge formation, converting hancockiamide A into hancockiamide G. Hkm5 can also convert hancockiamide B into hancockiamide C, and hancockiamide D into hancockiamide H. The N-acetyltransferase hkm3 finally transfers an acetyl group to 1-N of piperazine, converting hancockiamide A into hancockiamide B and hancockiamide G into hancockiamide C. This is Nonribosomal peptide synthetase hkm11 from Aspergillus hancockii.